Consider the following 297-residue polypeptide: Small ribosomal subunit biogenesis GTPase RsgA (297 aa).

The 159-residue stretch at 65 to 223 folds into the CP-type G domain; that stretch reads TNEIGRPAVA…IADTPGFSAI (159 aa). GTP-binding positions include 114–117 and 166–174; these read SKAD and GQSGAGKST. Zn(2+)-binding residues include cysteine 247, cysteine 252, histidine 254, and cysteine 260.

The protein belongs to the TRAFAC class YlqF/YawG GTPase family. RsgA subfamily. As to quaternary structure, monomer. Associates with 30S ribosomal subunit, binds 16S rRNA. Zn(2+) serves as cofactor.

The protein resides in the cytoplasm. Functionally, one of several proteins that assist in the late maturation steps of the functional core of the 30S ribosomal subunit. Helps release RbfA from mature subunits. May play a role in the assembly of ribosomal proteins into the subunit. Circularly permuted GTPase that catalyzes slow GTP hydrolysis, GTPase activity is stimulated by the 30S ribosomal subunit. This chain is Small ribosomal subunit biogenesis GTPase RsgA, found in Lactobacillus gasseri (strain ATCC 33323 / DSM 20243 / BCRC 14619 / CIP 102991 / JCM 1131 / KCTC 3163 / NCIMB 11718 / NCTC 13722 / AM63).